Reading from the N-terminus, the 1032-residue chain is Error-prone DNA polymerase (1032 aa).

It belongs to the DNA polymerase type-C family. DnaE2 subfamily.

It is found in the cytoplasm. The catalysed reaction is DNA(n) + a 2'-deoxyribonucleoside 5'-triphosphate = DNA(n+1) + diphosphate. Functionally, DNA polymerase involved in damage-induced mutagenesis and translesion synthesis (TLS). It is not the major replicative DNA polymerase. In Hahella chejuensis (strain KCTC 2396), this protein is Error-prone DNA polymerase.